Reading from the N-terminus, the 201-residue chain is Glycerol-3-phosphate acyltransferase (201 aa).

6 helical membrane passes run 3-23 (TVLF…VVVS), 51-71 (KAAI…VWLV), 85-105 (VALV…FRFV), 116-136 (VLLA…LVIA), 137-157 (YAFR…PFYY), and 158-178 (GLLF…ILLV).

The protein belongs to the PlsY family. As to quaternary structure, probably interacts with PlsX.

Its subcellular location is the cell inner membrane. The catalysed reaction is an acyl phosphate + sn-glycerol 3-phosphate = a 1-acyl-sn-glycero-3-phosphate + phosphate. The protein operates within lipid metabolism; phospholipid metabolism. Functionally, catalyzes the transfer of an acyl group from acyl-phosphate (acyl-PO(4)) to glycerol-3-phosphate (G3P) to form lysophosphatidic acid (LPA). This enzyme utilizes acyl-phosphate as fatty acyl donor, but not acyl-CoA or acyl-ACP. This chain is Glycerol-3-phosphate acyltransferase, found in Janthinobacterium sp. (strain Marseille) (Minibacterium massiliensis).